The sequence spans 150 residues: Transcriptional repressor NrdR (150 aa).

A zinc finger spans residues 3–34; the sequence is CPFCNFSDSKVVDSRPDKGGAAIRRRRECESC. The 91-residue stretch at 49 to 139 folds into the ATP-cone domain; it reads PLVTKRDGRR…VYRSFKDINE (91 aa).

The protein belongs to the NrdR family. It depends on Zn(2+) as a cofactor.

Functionally, negatively regulates transcription of bacterial ribonucleotide reductase nrd genes and operons by binding to NrdR-boxes. The polypeptide is Transcriptional repressor NrdR (Citrifermentans bemidjiense (strain ATCC BAA-1014 / DSM 16622 / JCM 12645 / Bem) (Geobacter bemidjiensis)).